The primary structure comprises 421 residues: Serine hydroxymethyltransferase (421 aa).

(6S)-5,6,7,8-tetrahydrofolate is bound by residues L123 and 127-129 (GHL). Position 232 is an N6-(pyridoxal phosphate)lysine (K232).

This sequence belongs to the SHMT family. In terms of assembly, homodimer. Pyridoxal 5'-phosphate is required as a cofactor.

The protein resides in the cytoplasm. The enzyme catalyses (6R)-5,10-methylene-5,6,7,8-tetrahydrofolate + glycine + H2O = (6S)-5,6,7,8-tetrahydrofolate + L-serine. Its pathway is one-carbon metabolism; tetrahydrofolate interconversion. It functions in the pathway amino-acid biosynthesis; glycine biosynthesis; glycine from L-serine: step 1/1. Catalyzes the reversible interconversion of serine and glycine with tetrahydrofolate (THF) serving as the one-carbon carrier. This reaction serves as the major source of one-carbon groups required for the biosynthesis of purines, thymidylate, methionine, and other important biomolecules. Also exhibits THF-independent aldolase activity toward beta-hydroxyamino acids, producing glycine and aldehydes, via a retro-aldol mechanism. The protein is Serine hydroxymethyltransferase of Ehrlichia canis (strain Jake).